A 100-amino-acid polypeptide reads, in one-letter code: Aspartyl/glutamyl-tRNA(Asn/Gln) amidotransferase subunit C (100 aa).

This sequence belongs to the GatC family. Heterotrimer of A, B and C subunits.

It catalyses the reaction L-glutamyl-tRNA(Gln) + L-glutamine + ATP + H2O = L-glutaminyl-tRNA(Gln) + L-glutamate + ADP + phosphate + H(+). The enzyme catalyses L-aspartyl-tRNA(Asn) + L-glutamine + ATP + H2O = L-asparaginyl-tRNA(Asn) + L-glutamate + ADP + phosphate + 2 H(+). Functionally, allows the formation of correctly charged Asn-tRNA(Asn) or Gln-tRNA(Gln) through the transamidation of misacylated Asp-tRNA(Asn) or Glu-tRNA(Gln) in organisms which lack either or both of asparaginyl-tRNA or glutaminyl-tRNA synthetases. The reaction takes place in the presence of glutamine and ATP through an activated phospho-Asp-tRNA(Asn) or phospho-Glu-tRNA(Gln). This Herminiimonas arsenicoxydans protein is Aspartyl/glutamyl-tRNA(Asn/Gln) amidotransferase subunit C.